Consider the following 512-residue polypeptide: ATP synthase subunit alpha (512 aa).

Residue 169 to 176 participates in ATP binding; sequence GDRQTGKT.

Belongs to the ATPase alpha/beta chains family. In terms of assembly, F-type ATPases have 2 components, CF(1) - the catalytic core - and CF(0) - the membrane proton channel. CF(1) has five subunits: alpha(3), beta(3), gamma(1), delta(1), epsilon(1). CF(0) has three main subunits: a(1), b(2) and c(9-12). The alpha and beta chains form an alternating ring which encloses part of the gamma chain. CF(1) is attached to CF(0) by a central stalk formed by the gamma and epsilon chains, while a peripheral stalk is formed by the delta and b chains.

Its subcellular location is the cell membrane. It catalyses the reaction ATP + H2O + 4 H(+)(in) = ADP + phosphate + 5 H(+)(out). Produces ATP from ADP in the presence of a proton gradient across the membrane. The alpha chain is a regulatory subunit. The polypeptide is ATP synthase subunit alpha (Buchnera aphidicola subsp. Acyrthosiphon pisum (strain Tuc7)).